The primary structure comprises 95 residues: Large ribosomal subunit protein eL31 (95 aa).

This sequence belongs to the eukaryotic ribosomal protein eL31 family.

This chain is Large ribosomal subunit protein eL31 (rpl31e), found in Pyrococcus horikoshii (strain ATCC 700860 / DSM 12428 / JCM 9974 / NBRC 100139 / OT-3).